Consider the following 396-residue polypeptide: MAKGKFERTKPHVNVGTIGHVDHGKTTLTAAITTVLTKKFGGEAKDYSQIDNAPEERARGITINTSHVEYETETRHYAHVDCPGHADYVKNMITGAAQMDGAILVVSAADGPMPQTREHILLARQVGVPYIIVFLNKADMVDDAELLELVEMEVRELLSKYDFPGDDTPIIKGSAKLALEGDQSDIGEPAIFRLAEALDTYIPTPERAVDGTFLMPVEDVFSISGRGTVVTGRVERGIVKVGDEIEIVGLKPTIKTTCTGVEMFRKLLDQGQAGDNVGVLLRGTKREEVERGQVLAKVGSIKPHTKFTAEIYVLGKDEGGRHTPFFNGYRPQFYFRTTDVTGAVELPAGTEMVMPGDNVSISVSLIAPIAMEEGLRFAIREGGRTVGAGVVAKIIE.

Positions Lys-10–Glu-206 constitute a tr-type G domain. The interval Gly-19–Thr-26 is G1. Gly-19–Thr-26 contacts GTP. Position 26 (Thr-26) interacts with Mg(2+). Residues Gly-60–Asn-64 form a G2 region. The tract at residues Asp-81–Gly-84 is G3. GTP is bound by residues Asp-81 to His-85 and Asn-136 to Asp-139. A G4 region spans residues Asn-136–Asp-139. Positions Ser-174–Lys-176 are G5.

Belongs to the TRAFAC class translation factor GTPase superfamily. Classic translation factor GTPase family. EF-Tu/EF-1A subfamily. As to quaternary structure, monomer.

The protein resides in the cytoplasm. It carries out the reaction GTP + H2O = GDP + phosphate + H(+). Its function is as follows. GTP hydrolase that promotes the GTP-dependent binding of aminoacyl-tRNA to the A-site of ribosomes during protein biosynthesis. The polypeptide is Elongation factor Tu 2 (Methylobacillus flagellatus (strain ATCC 51484 / DSM 6875 / VKM B-1610 / KT)).